Consider the following 345-residue polypeptide: Glycerol-3-phosphate dehydrogenase [NAD(P)+] (345 aa).

NADPH-binding residues include Ser23, Tyr24, His44, and Lys118. 3 residues coordinate sn-glycerol 3-phosphate: Lys118, Gly147, and Thr149. Residue Ala151 participates in NADPH binding. Sn-glycerol 3-phosphate contacts are provided by Lys203, Asp256, Ser266, Arg267, and Asn268. Catalysis depends on Lys203, which acts as the Proton acceptor. Residue Arg267 coordinates NADPH. Positions 291 and 293 each coordinate NADPH.

The protein belongs to the NAD-dependent glycerol-3-phosphate dehydrogenase family.

The protein resides in the cytoplasm. It catalyses the reaction sn-glycerol 3-phosphate + NAD(+) = dihydroxyacetone phosphate + NADH + H(+). The enzyme catalyses sn-glycerol 3-phosphate + NADP(+) = dihydroxyacetone phosphate + NADPH + H(+). Its pathway is membrane lipid metabolism; glycerophospholipid metabolism. Functionally, catalyzes the reduction of the glycolytic intermediate dihydroxyacetone phosphate (DHAP) to sn-glycerol 3-phosphate (G3P), the key precursor for phospholipid synthesis. This is Glycerol-3-phosphate dehydrogenase [NAD(P)+] from Vibrio vulnificus (strain CMCP6).